The following is a 1037-amino-acid chain: uncharacterized protein (1037 aa).

This is an uncharacterized protein from Saccharomyces cerevisiae (strain ATCC 204508 / S288c) (Baker's yeast).